Consider the following 400-residue polypeptide: Involucrin (400 aa).

3 disordered regions span residues 1-196 (MSQQ…HLKQ), 273-312 (KEEV…EQQL), and 333-381 (KRDE…KGEV). Composition is skewed to low complexity over residues 78–159 (QQQQ…QQHQ), 169–186 (EQQQ…GQQE), and 279–292 (EQQQ…QQHQ). Positions 333 to 344 (KRDEQLGKKEEQ) are enriched in basic and acidic residues. A compositionally biased stretch (low complexity) spans 346-358 (LEPSEQQEGLLEQ).

It belongs to the involucrin family. In terms of assembly, directly or indirectly cross-linked to cornifelin (CNFN). Substrate of transglutaminase. Specific glutamines or lysines are cross-linked to keratins, desmoplakin and to inter involucrin molecules. In terms of tissue distribution, keratinocytes of epidermis and other stratified squamous epithelia.

The protein resides in the cytoplasm. In terms of biological role, part of the insoluble cornified cell envelope (CE) of stratified squamous epithelia. The sequence is that of Involucrin (IVL) from Tupaia glis (Common tree shrew).